A 119-amino-acid polypeptide reads, in one-letter code: Large ribosomal subunit protein bL20c (119 aa).

This sequence belongs to the bacterial ribosomal protein bL20 family.

It is found in the plastid. It localises to the chloroplast. Binds directly to 23S ribosomal RNA and is necessary for the in vitro assembly process of the 50S ribosomal subunit. It is not involved in the protein synthesizing functions of that subunit. The sequence is that of Large ribosomal subunit protein bL20c (rpl20) from Oryza sativa (Rice).